The primary structure comprises 504 residues: Beta-xylosidase (504 aa).

The active-site Proton donor is Glu-160. Glu-280 functions as the Nucleophile in the catalytic mechanism.

The protein belongs to the glycosyl hydrolase 39 family.

The catalysed reaction is Hydrolysis of (1-&gt;4)-beta-D-xylans, to remove successive D-xylose residues from the non-reducing termini.. This is Beta-xylosidase (xynB) from Geobacillus stearothermophilus (Bacillus stearothermophilus).